The sequence spans 216 residues: MSFSESRHNENCLIQEGALLFCEQAVVAPVSGDLVFRPLKIEVLSKLLAFIDGAGLVDTTYAESDKWVLLSPEFRAIWQDRKRCEYWFLQQIITPSPAFNKVLALLRKSESYWLVGYLLAQSTSGNTMRMLGEDYGVSYTHFRRLCSRALGGKAKSELRNWRMAQSLLNSVEGHENITQLAVNHGYSSPSHFSSEIKELIGVSPRKLSNIIQLADK.

Positions 112-210 (YWLVGYLLAQ…GVSPRKLSNI (99 aa)) constitute an HTH araC/xylS-type domain. 2 DNA-binding regions (H-T-H motif) span residues 129–150 (RMLG…SRAL) and 177–200 (ITQL…KELI).

Its function is as follows. Transcriptional regulator required for the expression of several genes encoding type III secretion system SPI1 effector proteins. The interaction with SicA is necessary for the activation of sigDE (sopB pipC), sicAsipBCDA, and sopE. The polypeptide is Invasion protein InvF (invF) (Salmonella typhi).